The sequence spans 179 residues: GTP-dependent dephospho-CoA kinase (179 aa).

GTP contacts are provided by Asp-55, Val-57, Asp-74, Lys-76, and Glu-128.

Belongs to the GTP-dependent DPCK family.

It catalyses the reaction 3'-dephospho-CoA + GTP = GDP + CoA + H(+). The protein operates within cofactor biosynthesis; coenzyme A biosynthesis. Its function is as follows. Catalyzes the GTP-dependent phosphorylation of the 3'-hydroxyl group of dephosphocoenzyme A to form coenzyme A (CoA). This Saccharolobus islandicus (strain M.16.27) (Sulfolobus islandicus) protein is GTP-dependent dephospho-CoA kinase.